A 203-amino-acid chain; its full sequence is V-type ATP synthase subunit D (203 aa).

The protein belongs to the V-ATPase D subunit family.

Its function is as follows. Produces ATP from ADP in the presence of a proton gradient across the membrane. In Streptococcus pneumoniae (strain CGSP14), this protein is V-type ATP synthase subunit D.